The sequence spans 98 residues: NADH-ubiquinone oxidoreductase chain 4L (98 aa).

3 helical membrane passes run 1–21, 26–46, and 61–81; these read MNLI…GLIF, IINI…LFVL, and LYIL…VVIL.

The protein belongs to the complex I subunit 4L family.

The protein localises to the mitochondrion membrane. It carries out the reaction a ubiquinone + NADH + 5 H(+)(in) = a ubiquinol + NAD(+) + 4 H(+)(out). Functionally, core subunit of the mitochondrial membrane respiratory chain NADH dehydrogenase (Complex I) that is believed to belong to the minimal assembly required for catalysis. Complex I functions in the transfer of electrons from NADH to the respiratory chain. The immediate electron acceptor for the enzyme is believed to be ubiquinone. The protein is NADH-ubiquinone oxidoreductase chain 4L (nad4L) of Dictyostelium citrinum (Slime mold).